Consider the following 389-residue polypeptide: Chalcone synthase 2 (389 aa).

Residue 55-62 participates in CoA binding; that stretch reads KFQRMCDK. Catalysis depends on cysteine 164, which acts as the Acyl-thioester intermediate. Substrate is bound by residues threonine 197 and 216–217; that span reads GD. CoA is bound at residue alanine 308.

This sequence belongs to the thiolase-like superfamily. Chalcone/stilbene synthases family. In terms of assembly, homodimer.

The enzyme catalyses (E)-4-coumaroyl-CoA + 3 malonyl-CoA + 3 H(+) = 2',4,4',6'-tetrahydroxychalcone + 3 CO2 + 4 CoA. It participates in secondary metabolite biosynthesis; flavonoid biosynthesis. Its function is as follows. The primary product of this enzyme is 4,2',4',6'-tetrahydroxychalcone (also termed naringenin-chalcone or chalcone) which can under specific conditions spontaneously isomerize into naringenin. In Medicago sativa (Alfalfa), this protein is Chalcone synthase 2 (CHS2).